The following is a 122-amino-acid chain: Large ribosomal subunit protein uL18 (122 aa).

Positions 1 to 19 (MTKLSRKLQTQKRHRRLRR) are enriched in basic residues. Residues 1-21 (MTKLSRKLQTQKRHRRLRRSV) are disordered.

The protein belongs to the universal ribosomal protein uL18 family. As to quaternary structure, part of the 50S ribosomal subunit; part of the 5S rRNA/L5/L18/L25 subcomplex. Contacts the 5S and 23S rRNAs.

Functionally, this is one of the proteins that bind and probably mediate the attachment of the 5S RNA into the large ribosomal subunit, where it forms part of the central protuberance. In Prochlorococcus marinus (strain MIT 9312), this protein is Large ribosomal subunit protein uL18.